Here is a 527-residue protein sequence, read N- to C-terminus: Secologanin synthase 2 (527 aa).

Residues 1–11 (MEMDMDIIRKA) are Lumenal-facing. The chain crosses the membrane as a helical span at residues 12 to 32 (IAATIFALVMAWAWRVLDWAW). Topologically, residues 33–527 (FTPKRIEKRL…IYKKLERQNF (495 aa)) are cytoplasmic. Residue cysteine 470 participates in heme binding.

Belongs to the cytochrome P450 family. Heme is required as a cofactor. Expressed in leaves (especially in leaf epidermis), and, to a lower extent, in roots, stems, flower buds and flowers.

The protein resides in the endoplasmic reticulum membrane. The catalysed reaction is loganin + reduced [NADPH--hemoprotein reductase] + O2 = secologanin + oxidized [NADPH--hemoprotein reductase] + 2 H2O + H(+). It carries out the reaction secologanin + reduced [NADPH--hemoprotein reductase] + O2 = secoxyloganin + oxidized [NADPH--hemoprotein reductase] + H2O + 2 H(+). Its pathway is alkaloid biosynthesis. In terms of biological role, component of the seco-iridoid and derivatives monoterpenoid indole alkaloids (MIAs, e.g. secologanin) biosynthesis pathway. Catalyzes the conversion of loganin into secologanin. Catalyzes the conversion of secologanin into secoxyloganin. The protein is Secologanin synthase 2 of Catharanthus roseus (Madagascar periwinkle).